Reading from the N-terminus, the 191-residue chain is Thymidylate kinase (191 aa).

7–14 contributes to the ATP binding site; it reads GVDGAGKS.

This sequence belongs to the thymidylate kinase family.

It catalyses the reaction dTMP + ATP = dTDP + ADP. Its function is as follows. Phosphorylation of dTMP to form dTDP in both de novo and salvage pathways of dTTP synthesis. This is Thymidylate kinase (tmk) from Helicobacter pylori (strain ATCC 700392 / 26695) (Campylobacter pylori).